The sequence spans 450 residues: Bifunctional apoptosis regulator (450 aa).

Positions 1 to 20 are disordered; sequence MEEPQKSYVNTMDLERDEPL. Over 1–140 the chain is Cytoplasmic; it reads MEEPQKSYVN…PNTGRANQQM (140 aa). The RING-type zinc finger occupies 34–74; it reads CHCCYDILVNPTTLNCGHSFCRHCLALWWASSKKTECPECR. A helical membrane pass occupies residues 141-161; it reads GGGFFSGVLTALTGVAVVLLV. Residues 162–331 are Lumenal-facing; sequence YHWSSRESEH…KEPTWKQWRE (170 aa). The 68-residue stretch at 182-249 folds into the SAM domain; the sequence is WTAEEVVLWL…LMELERVKAL (68 aa). A glycan (N-linked (GlcNAc...) asparagine) is linked at N232. Residues 332–352 form a helical membrane-spanning segment; sequence FLVKYSFLPYQLIAEFAWDWL. The Cytoplasmic portion of the chain corresponds to 353–360; that stretch reads EVHYWTSR. Residues 361-381 traverse the membrane as a helical segment; that stretch reads FLIINAMLLSVLELFSFWRIW. Residues 382 to 404 are Lumenal-facing; sequence SRSELKTVPQRMWSHFWKVSTQG. Residues 405–425 traverse the membrane as a helical segment; that stretch reads LFVAMFWPLIPQFVCNCLFYW. Topologically, residues 426-450 are cytoplasmic; sequence ALYFNPIINIDLVVKELRRLETQVL.

Interacts with CASP8, BCL2 and BCL2L1 through SAM domain and also with HIP1, IFT57, ESRRBL1 and BCAP31. Interacts with NGFR; this interaction inhibits NF-kappa-B and JNK-related signaling pathways. Mediates RING-dependent self-ubiquitination leading to proteasomal degradation. In terms of tissue distribution, expressed highly in brain, moderately in small intestine, weakly in testes and only faintly in liver and skeletal muscle. Not expressed in heart, kidney, lung and spleen.

The protein localises to the endoplasmic reticulum membrane. It carries out the reaction S-ubiquitinyl-[E2 ubiquitin-conjugating enzyme]-L-cysteine + [acceptor protein]-L-lysine = [E2 ubiquitin-conjugating enzyme]-L-cysteine + N(6)-ubiquitinyl-[acceptor protein]-L-lysine.. Its function is as follows. Membrane-bound E3 ubiquitin ligase that plays a role in several processes including apoptosis regulation or reticulum endoplasmic stress. Has anti-apoptotic activity, both for apoptosis triggered via death-receptors and via mitochondrial factors. Contributes to the dynamic control of IRE1/ERN1 signaling during ER stress by inducing BAX inhibitor 1/TMBIM6 proteasomal degradation. Promotes the activation of TGF-beta signaling by mediating the 'Lys-63'-linked ubiquitination of TGFBR1 which is critical to activate the pathway. Together with NGFR, negatively regulates NF-kappa-B and JNK-related signaling pathways. Promotes the proteasome-mediated degradation of PNPLA3, a protein involveld in lipid metabolism. The chain is Bifunctional apoptosis regulator (BFAR) from Homo sapiens (Human).